A 461-amino-acid chain; its full sequence is Mycosin-3 (461 aa).

The first 25 residues, 1-25, serve as a signal peptide directing secretion; it reads MIRAAFACLAATVVVAGWWTPPAWA. In terms of domain architecture, Peptidase S8 spans 64-397; that stretch reads DPGVPTPSQT…AGNLDAVAAL (334 aa). Catalysis depends on charge relay system residues D95, H126, and S342. Residues 432–452 form a helical membrane-spanning segment; that stretch reads AFAGAAALSVLVGLTAATVAI.

The protein belongs to the peptidase S8 family.

It localises to the cell membrane. This is Mycosin-3 from Mycobacterium tuberculosis (strain ATCC 25618 / H37Rv).